We begin with the raw amino-acid sequence, 212 residues long: Response regulator SsrB (212 aa).

Positions 1–138 are required for prevention of DNA binding in absence of phosphorylation and for full stimulation of activity by acidic pH; sequence MKEYKILLVD…PTLNREAILA (138 aa). The Response regulatory domain maps to 5–121; the sequence is KILLVDDHEI…VLLAALQTVA (117 aa). 4-aspartylphosphate is present on aspartate 56. An HTH luxR-type domain is found at 143–208; it reads DTTNHQLLTL…ELLNCARRMR (66 aa). Residues 167–186 constitute a DNA-binding region (H-T-H motif); it reads NHGISEKLHISIKTVETHRM. Residue cysteine 203 is modified to S-nitrosocysteine.

As to quaternary structure, homodimer; disulfide-linked; dimerizes upon DNA-binding. SsrB phosphorylated on Asp-56 activates the expression of virulence genes whereas the unphosphorylated form controls biofilm formation. Independently of SsrA, can be phosphorylated by small inorganic phosphate donors (such as acetyl phosphate or phosphoramidate). Post-translationally, disulfide bond formation at Cys-203 is not required for dimerization. In terms of processing, cys-203 may serve as a redox sensor that is nitrosylated in presence of reactive nitrogen species (RNS) generated by the host, the modification modulates its DNA-binding activity. Cys-203 is relatively resistant to oxidation by hydrogen peroxide.

The protein localises to the cytoplasm. Its function is as follows. Member of the two-component regulatory system SsrA/SsrB (SpiR/SsrB) that is required for intracellular proliferation and systemic dissemination within the host. When inside acidic Salmonella-containing vesicles (SCV) within host cells the SsrA sensor kinase autophosphorylates and the phosphoryl group is transferred to the response regulator SsrB; phosphorylated SsrB activates the expression of genes encoding virulence proteins, including pathogenicity island 2 (SPI2) and other horizontally acquired genes, but also ancestral genes; it can stimulate gene expression both by recruiting RNA polymerase and by antagonizing the action of the transcriptional repressor hns (H-NS). Can also act independently of sensor kinase ssrA to support the dormant carrier state by directing the transcription of factors required for biofilm formation. DNA-binding is stimulated by acidic pH conditions, and binding promotes bending of DNA both upstream and downstream of binding sites. Binds a degenerate 18-basepair palindromic sequence with a 7-4-7 internal organization, and regulates gene expression from 86 operons. When phosphorylated, activates the transcription of the ABC transporter complex dalSTUV, which helps protect the organism from oxidative killing by host neutrophils. Binds the phoP promoter to stimulate expression in acidic pH conditions. Antagonizes hns to activate the transcription of ugtL. Following invasion of host cells, binds the hilD and hilA regulatory regions to repress their transcription and consequently to repress transcription of pathogenicity island 1 (SPI1) encoding genes involved in host cell invasion. Binds the promoters of the flagellar master regulators flhD and flhC to repress their expression and consequently to suppress flagellar motility and promote evasion of the host inflammasome during infection of host cells. Activates expression of sseI/srfH, sifA, sifB, sseJ and regulates its own expression. When unphosphorylated, relieves the hns-mediated repression of master biofilm regulator csgD by binding and bending the csgD regulatory region. May act as early as in the lumen of the host small intestine, to activate the expression of virulence proteins prior to invasion of host cells. This is Response regulator SsrB from Salmonella typhimurium (strain LT2 / SGSC1412 / ATCC 700720).